Consider the following 283-residue polypeptide: Pantothenate synthetase (283 aa).

30–37 (MGNLHDGH) contacts ATP. Residue H37 is the Proton donor of the active site. Q61 serves as a coordination point for (R)-pantoate. Residue Q61 participates in beta-alanine binding. 149-152 (GEKD) provides a ligand contact to ATP. (R)-pantoate is bound at residue Q155. 186–189 (LSSR) contributes to the ATP binding site.

This sequence belongs to the pantothenate synthetase family. In terms of assembly, homodimer.

The protein localises to the cytoplasm. It catalyses the reaction (R)-pantoate + beta-alanine + ATP = (R)-pantothenate + AMP + diphosphate + H(+). It participates in cofactor biosynthesis; (R)-pantothenate biosynthesis; (R)-pantothenate from (R)-pantoate and beta-alanine: step 1/1. Its function is as follows. Catalyzes the condensation of pantoate with beta-alanine in an ATP-dependent reaction via a pantoyl-adenylate intermediate. The polypeptide is Pantothenate synthetase (Escherichia coli O157:H7).